The sequence spans 156 residues: Small ribosomal subunit protein uS7 (156 aa).

Belongs to the universal ribosomal protein uS7 family. In terms of assembly, part of the 30S ribosomal subunit. Contacts proteins S9 and S11.

In terms of biological role, one of the primary rRNA binding proteins, it binds directly to 16S rRNA where it nucleates assembly of the head domain of the 30S subunit. Is located at the subunit interface close to the decoding center, probably blocks exit of the E-site tRNA. The sequence is that of Small ribosomal subunit protein uS7 from Prochlorococcus marinus (strain MIT 9301).